We begin with the raw amino-acid sequence, 208 residues long: Glutathione S-transferase (208 aa).

Residues 1–78 enclose the GST N-terminal domain; sequence MSYKLTYFPI…HLARKFNLNG (78 aa). Residues Y7, K42, 49–50, and 62–63 each bind glutathione; these read QL and QS. The 121-residue stretch at 80–200 folds into the GST C-terminal domain; sequence NNAETSYVDM…YCAKRNASKM (121 aa).

It belongs to the GST superfamily. Pi family. In terms of assembly, homodimer.

The catalysed reaction is RX + glutathione = an S-substituted glutathione + a halide anion + H(+). In terms of biological role, conjugation of reduced glutathione to a wide number of exogenous and endogenous hydrophobic electrophiles. This Dirofilaria immitis (Canine heartworm) protein is Glutathione S-transferase.